A 119-amino-acid chain; its full sequence is C-X-C motif chemokine 17 (119 aa).

Positions 1-21 (MKVLISSLLLLLPLMLMSMVS) are cleaved as a signal peptide. 2 cysteine pairs are disulfide-bonded: C75-C103 and C77-C110. Residues 81 to 100 (KGNVKKTRHQRHHRKPNKHS) are disordered. A compositionally biased stretch (basic residues) spans 82–100 (GNVKKTRHQRHHRKPNKHS).

This sequence belongs to the intercrine alpha (chemokine CxC) family. Post-translationally, likely to undergo an endoproteolytic process to form a four-cysteine-containing mature peptide with a canonical CXC chemokine scaffold after secretion. In terms of tissue distribution, detected in trachea, stomach, lung and skeletal muscle. Detected in intestine and in normal and asthmatic lung (at protein level). Breast tumors showed 3- to 24-fold up-regulation.

The protein localises to the secreted. In terms of biological role, chemokine that acts as a chemoattractant for monocytes, macrophages and dendritic cells. Plays a role in angiogenesis and possibly in the development of tumors. Acts as an anti-inflammatory in the stomach. May play a role in the innate defense against infections. Activates the C-X-C chemokine receptor GPR35 to induce a rapid and transient rise in the level of intracellular calcium ions. Functionally, seems to exhibit much higher chemoattractant potency on monocytes and macrophages than 6-Cys CXCL17. In Homo sapiens (Human), this protein is C-X-C motif chemokine 17 (CXCL17).